The primary structure comprises 264 residues: MNRDNTKTNKTVKQEFASFTFVICIALVIRILIMEPFTVPTGSMKATILENDYIFSTKYSYGYSNYSLSFFDFIPLFKGRVFAREPERGDIVVFRPPNDMSVRYIKRLIGLPGDKIQLIDDVIYINDKKIERTEVGTYIGEDGIKYLKFKETLPNGRTYFSYKLAPIFGIISNDRYSNTGVFYVPEGQYFFLGDNRDRSNDSRVNLGFVPFENFIGKAQFIWFSTKITWWDNDIGIINLILKLKPWIESVRLSRIFKNLYNVDE.

Topologically, residues 1–18 are cytoplasmic; it reads MNRDNTKTNKTVKQEFAS. A helical transmembrane segment spans residues 19–39; the sequence is FTFVICIALVIRILIMEPFTV. Residues 40 to 264 are Periplasmic-facing; sequence PTGSMKATIL…IFKNLYNVDE (225 aa). Catalysis depends on residues serine 43 and lysine 106.

This sequence belongs to the peptidase S26 family.

It localises to the cell inner membrane. The catalysed reaction is Cleavage of hydrophobic, N-terminal signal or leader sequences from secreted and periplasmic proteins.. In terms of biological role, complements E.coli mutants temperature-sensitive for LepB function. This chain is Signal peptidase I (lepB), found in Rickettsia typhi (strain ATCC VR-144 / Wilmington).